The following is a 607-amino-acid chain: Elongation factor 4 (607 aa).

The tr-type G domain maps to 11–193 (SKIRNFSIIA…QIVEKVPAPT (183 aa)). Residues 23-28 (DHGKST) and 140-143 (NKID) contribute to the GTP site.

The protein belongs to the TRAFAC class translation factor GTPase superfamily. Classic translation factor GTPase family. LepA subfamily.

Its subcellular location is the cell membrane. It catalyses the reaction GTP + H2O = GDP + phosphate + H(+). Required for accurate and efficient protein synthesis under certain stress conditions. May act as a fidelity factor of the translation reaction, by catalyzing a one-codon backward translocation of tRNAs on improperly translocated ribosomes. Back-translocation proceeds from a post-translocation (POST) complex to a pre-translocation (PRE) complex, thus giving elongation factor G a second chance to translocate the tRNAs correctly. Binds to ribosomes in a GTP-dependent manner. This chain is Elongation factor 4, found in Bacillus cereus (strain ATCC 10987 / NRS 248).